Here is a 398-residue protein sequence, read N- to C-terminus: Exodeoxyribonuclease 7 large subunit (398 aa).

Belongs to the XseA family. As to quaternary structure, heterooligomer composed of large and small subunits.

The protein localises to the cytoplasm. The enzyme catalyses Exonucleolytic cleavage in either 5'- to 3'- or 3'- to 5'-direction to yield nucleoside 5'-phosphates.. In terms of biological role, bidirectionally degrades single-stranded DNA into large acid-insoluble oligonucleotides, which are then degraded further into small acid-soluble oligonucleotides. The protein is Exodeoxyribonuclease 7 large subunit of Anaplasma phagocytophilum (strain HZ).